Reading from the N-terminus, the 334-residue chain is Phosphate acyltransferase (334 aa).

Belongs to the PlsX family. Homodimer. Probably interacts with PlsY.

Its subcellular location is the cytoplasm. The catalysed reaction is a fatty acyl-[ACP] + phosphate = an acyl phosphate + holo-[ACP]. Its pathway is lipid metabolism; phospholipid metabolism. In terms of biological role, catalyzes the reversible formation of acyl-phosphate (acyl-PO(4)) from acyl-[acyl-carrier-protein] (acyl-ACP). This enzyme utilizes acyl-ACP as fatty acyl donor, but not acyl-CoA. The sequence is that of Phosphate acyltransferase from Caldicellulosiruptor saccharolyticus (strain ATCC 43494 / DSM 8903 / Tp8T 6331).